The primary structure comprises 156 residues: Small ribosomal subunit protein uS7 (156 aa).

This sequence belongs to the universal ribosomal protein uS7 family. As to quaternary structure, part of the 30S ribosomal subunit. Contacts proteins S9 and S11.

Functionally, one of the primary rRNA binding proteins, it binds directly to 16S rRNA where it nucleates assembly of the head domain of the 30S subunit. Is located at the subunit interface close to the decoding center, probably blocks exit of the E-site tRNA. This is Small ribosomal subunit protein uS7 from Vibrio parahaemolyticus serotype O3:K6 (strain RIMD 2210633).